A 131-amino-acid chain; its full sequence is UPF0102 protein H16_A3579 (131 aa).

The protein belongs to the UPF0102 family.

The chain is UPF0102 protein H16_A3579 from Cupriavidus necator (strain ATCC 17699 / DSM 428 / KCTC 22496 / NCIMB 10442 / H16 / Stanier 337) (Ralstonia eutropha).